The sequence spans 360 residues: DNA primase large subunit PriL (360 aa).

4 residues coordinate [4Fe-4S] cluster: Cys-237, Cys-309, Cys-318, and Cys-325. The disordered stretch occupies residues 340–360; sequence DDGDDDDLADWRDREDDDSPD.

It belongs to the eukaryotic-type primase large subunit family. In terms of assembly, heterodimer of a small subunit (PriS) and a large subunit (PriL). The cofactor is [4Fe-4S] cluster.

Regulatory subunit of DNA primase, an RNA polymerase that catalyzes the synthesis of short RNA molecules used as primers for DNA polymerase during DNA replication. Stabilizes and modulates the activity of the small subunit, increasing the rate of DNA synthesis, and conferring RNA synthesis capability. The DNA polymerase activity may enable DNA primase to also catalyze primer extension after primer synthesis. May also play a role in DNA repair. The polypeptide is DNA primase large subunit PriL (Halobacterium salinarum (strain ATCC 29341 / DSM 671 / R1)).